We begin with the raw amino-acid sequence, 239 residues long: Ribonuclease HII (239 aa).

The RNase H type-2 domain occupies 30–221 (GPVAGVDEVG…VRRVANGSGG (192 aa)). Positions 36, 37, and 130 each coordinate a divalent metal cation.

The protein belongs to the RNase HII family. It depends on Mn(2+) as a cofactor. The cofactor is Mg(2+).

The protein resides in the cytoplasm. The catalysed reaction is Endonucleolytic cleavage to 5'-phosphomonoester.. Endonuclease that specifically degrades the RNA of RNA-DNA hybrids. The polypeptide is Ribonuclease HII (Mycolicibacterium paratuberculosis (strain ATCC BAA-968 / K-10) (Mycobacterium paratuberculosis)).